We begin with the raw amino-acid sequence, 210 residues long: Large ribosomal subunit protein bL25 (210 aa).

The disordered stretch occupies residues 191-210 (KPAPKAAETDEDGEEAASEE). The segment covering 199-210 (TDEDGEEAASEE) has biased composition (acidic residues).

This sequence belongs to the bacterial ribosomal protein bL25 family. CTC subfamily. In terms of assembly, part of the 50S ribosomal subunit; part of the 5S rRNA/L5/L18/L25 subcomplex. Contacts the 5S rRNA. Binds to the 5S rRNA independently of L5 and L18.

This is one of the proteins that binds to the 5S RNA in the ribosome where it forms part of the central protuberance. This is Large ribosomal subunit protein bL25 from Alteromonas mediterranea (strain DSM 17117 / CIP 110805 / LMG 28347 / Deep ecotype).